We begin with the raw amino-acid sequence, 207 residues long: Small ribosomal subunit protein uS4 (207 aa).

A disordered region spans residues 31–54; that stretch reads KCKLDSKPGQHGRTSGARTSDYGN. The segment covering 42–53 has biased composition (polar residues); the sequence is GRTSGARTSDYG. Residues 97–160 enclose the S4 RNA-binding domain; that stretch reads SRLDNVVYRM…KKQVRIAEAL (64 aa).

Belongs to the universal ribosomal protein uS4 family. Part of the 30S ribosomal subunit. Contacts protein S5. The interaction surface between S4 and S5 is involved in control of translational fidelity.

In terms of biological role, one of the primary rRNA binding proteins, it binds directly to 16S rRNA where it nucleates assembly of the body of the 30S subunit. Its function is as follows. With S5 and S12 plays an important role in translational accuracy. In Cupriavidus metallidurans (strain ATCC 43123 / DSM 2839 / NBRC 102507 / CH34) (Ralstonia metallidurans), this protein is Small ribosomal subunit protein uS4.